The sequence spans 554 residues: Asparagine--tRNA ligase, cytoplasmic (554 aa).

This sequence belongs to the class-II aminoacyl-tRNA synthetase family.

It localises to the cytoplasm. The protein localises to the cytosol. It catalyses the reaction tRNA(Asn) + L-asparagine + ATP = L-asparaginyl-tRNA(Asn) + AMP + diphosphate + H(+). Catalyzes the attachment of asparagine to tRNA(Asn) in a two-step reaction: asparagine is first activated by ATP to form Asn-AMP and then transferred to the acceptor end of tRNA(Asn). This chain is Asparagine--tRNA ligase, cytoplasmic, found in Saccharomyces cerevisiae (strain ATCC 204508 / S288c) (Baker's yeast).